Reading from the N-terminus, the 180-residue chain is Nucleoside triphosphate/diphosphate phosphatase (180 aa).

Residue Arg-26 is the Proton donor of the active site. Mg(2+)-binding residues include Asn-90, Asp-106, Asp-108, Asp-110, Asp-123, and Glu-126.

This sequence belongs to the Ntdp family. The cofactor is Mg(2+).

The catalysed reaction is a ribonucleoside 5'-triphosphate + H2O = a ribonucleoside 5'-diphosphate + phosphate + H(+). The enzyme catalyses a ribonucleoside 5'-diphosphate + H2O = a ribonucleoside 5'-phosphate + phosphate + H(+). In terms of biological role, has nucleoside phosphatase activity towards nucleoside triphosphates and nucleoside diphosphates. The protein is Nucleoside triphosphate/diphosphate phosphatase of Staphylococcus haemolyticus (strain JCSC1435).